We begin with the raw amino-acid sequence, 351 residues long: Protein-glutamate methylesterase/protein-glutamine glutaminase (351 aa).

One can recognise a Response regulatory domain in the interval 8-125; the sequence is TVVVVDDSLT…GEDPFAGLGD (118 aa). Asp59 is subject to 4-aspartylphosphate. In terms of domain architecture, CheB-type methylesterase spans 151–345; that stretch reads PKIGTVVGIG…PAILNLCERR (195 aa). Active-site residues include Ser162, His188, and Asp287.

Belongs to the CheB family. Post-translationally, phosphorylated by CheA. Phosphorylation of the N-terminal regulatory domain activates the methylesterase activity.

The protein localises to the cytoplasm. The catalysed reaction is [protein]-L-glutamate 5-O-methyl ester + H2O = L-glutamyl-[protein] + methanol + H(+). The enzyme catalyses L-glutaminyl-[protein] + H2O = L-glutamyl-[protein] + NH4(+). Functionally, involved in chemotaxis. Part of a chemotaxis signal transduction system that modulates chemotaxis in response to various stimuli. Catalyzes the demethylation of specific methylglutamate residues introduced into the chemoreceptors (methyl-accepting chemotaxis proteins or MCP) by CheR. Also mediates the irreversible deamidation of specific glutamine residues to glutamic acid. This Gluconobacter oxydans (strain 621H) (Gluconobacter suboxydans) protein is Protein-glutamate methylesterase/protein-glutamine glutaminase.